Reading from the N-terminus, the 94-residue chain is Protein canopy homolog 1 (94 aa).

The protein belongs to the canopy family.

This is Protein canopy homolog 1 (Cnpy1) from Mus musculus (Mouse).